We begin with the raw amino-acid sequence, 198 residues long: Ribonuclease HII (198 aa).

Residues 11 to 198 enclose the RNase H type-2 domain; the sequence is NLIAGVDEVG…GPVKRVLGLV (188 aa). A divalent metal cation is bound by residues Asp17, Glu18, and Asp109.

The protein belongs to the RNase HII family. Requires Mn(2+) as cofactor. Mg(2+) is required as a cofactor.

Its subcellular location is the cytoplasm. The catalysed reaction is Endonucleolytic cleavage to 5'-phosphomonoester.. Functionally, endonuclease that specifically degrades the RNA of RNA-DNA hybrids. The protein is Ribonuclease HII of Yersinia enterocolitica serotype O:8 / biotype 1B (strain NCTC 13174 / 8081).